A 181-amino-acid chain; its full sequence is Insulin-like growth factor 2 (181 aa).

An N-terminal signal peptide occupies residues 1 to 24; sequence MGIPMRKPLLVLLVFLALASCCYA. The segment at 25–52 is b; it reads AYRPSETLCGGELVDTLQFVCGDRGFYF. 3 cysteine pairs are disulfide-bonded: cysteine 33–cysteine 71, cysteine 45–cysteine 84, and cysteine 70–cysteine 75. Positions 53–64 are c; sequence SRPASRVNRRSR. An a region spans residues 65–85; it reads GIVEECCFRSCDLALLETYCA. The tract at residues 86–91 is d; that stretch reads TPAKSE. A propeptide spans 92–181 (e peptide); that stretch reads RDVSTPPTVL…ASPEASGHRK (90 aa). Positions 151–181 are disordered; sequence EAKRHRPLTARPTRDPAAHGGASPEASGHRK. Threonine 163 carries an O-linked (GalNAc...) threonine glycan.

The protein belongs to the insulin family. Interacts with MYORG; this interaction is required for IGF2 secretion. Interacts with integrins ITGAV:ITGB3 and ITGA6:ITGB4; integrin-binding is required for IGF2 signaling. Interacts with IGFBP2. Post-translationally, proteolytically processed by PCSK4, proIGF2 is cleaved at Arg-128 and Arg-92 to generate big-IGF2 and mature IGF2.

Its subcellular location is the secreted. Its function is as follows. The insulin-like growth factors possess growth-promoting activity. Major fetal growth hormone in mammals. Plays a key role in regulating fetoplacental development. IGF2 is influenced by placental lactogen. Also involved in tissue differentiation. In adults, involved in glucose metabolism in adipose tissue, skeletal muscle and liver. Acts as a ligand for integrin which is required for IGF2 signaling. Positively regulates myogenic transcription factor MYOD1 function by facilitating the recruitment of transcriptional coactivators, thereby controlling muscle terminal differentiation. Inhibits myoblast differentiation and modulates metabolism via increasing the mitochondrial respiration rate. Preptin undergoes glucose-mediated co-secretion with insulin, and acts as a physiological amplifier of glucose-mediated insulin secretion. Exhibits osteogenic properties by increasing osteoblast mitogenic activity through phosphoactivation of MAPK1 and MAPK3. This chain is Insulin-like growth factor 2, found in Sus scrofa (Pig).